Reading from the N-terminus, the 315-residue chain is NAD-dependent protein deacylase sirtuin-5, mitochondrial (315 aa).

The N-terminal 39 residues, 1–39 (MSLLHFATRRLILQVLRELGLKAPPVHKTLKICIAMSRP), are a transit peptide targeting the mitochondrion. In terms of domain architecture, Deacetylase sirtuin-type spans 40–312 (SSNMADFRRF…PEALSPHESE (273 aa)). Residue 61–80 (GAGVSAESGVPTFRGPGGFW) participates in NAD(+) binding. The substrate site is built by Tyr-105 and Arg-108. 143–146 (QNID) provides a ligand contact to NAD(+). Residue His-161 is the Proton acceptor of the active site. Residues 254-256 (GTS), 280-282 (NTV), and Cys-298 contribute to the NAD(+) site.

It belongs to the sirtuin family. Class III subfamily. In terms of assembly, monomer. Homodimer. Interacts with CPS1.

The protein resides in the mitochondrion. Its subcellular location is the cytoplasm. The protein localises to the cytosol. It localises to the nucleus. The catalysed reaction is N(6)-malonyl-L-lysyl-[protein] + NAD(+) + H2O = 2''-O-malonyl-ADP-D-ribose + nicotinamide + L-lysyl-[protein]. It carries out the reaction N(6)-succinyl-L-lysyl-[protein] + NAD(+) + H2O = 2''-O-succinyl-ADP-D-ribose + nicotinamide + L-lysyl-[protein]. It catalyses the reaction N(6)-glutaryl-L-lysyl-[protein] + NAD(+) + H2O = 2''-O-glutaryl-ADP-D-ribose + nicotinamide + L-lysyl-[protein]. Functionally, NAD-dependent lysine demalonylase, desuccinylase and deglutarylase that specifically removes malonyl, succinyl and glutaryl groups on target proteins. Activates CPS1 and contributes to the regulation of blood ammonia levels during prolonged fasting: acts by mediating desuccinylation and deglutarylation of CPS1, thereby increasing CPS1 activity in response to elevated NAD levels during fasting. Activates SOD1 by mediating its desuccinylation, leading to reduced reactive oxygen species. Activates SHMT2 by mediating its desuccinylation. Modulates ketogenesis through the desuccinylation and activation of HMGCS2. Has weak NAD-dependent protein deacetylase activity; however this activity may not be physiologically relevant in vivo. Can deacetylate cytochrome c (CYCS) and a number of other proteins in vitro such as UOX. The sequence is that of NAD-dependent protein deacylase sirtuin-5, mitochondrial from Monodelphis domestica (Gray short-tailed opossum).